Here is a 114-residue protein sequence, read N- to C-terminus: Macrophage migration inhibitory factor homolog (114 aa).

Pro2 (proton acceptor; via imino nitrogen) is an active-site residue. Substrate-binding residues include Lys33 and Ile65.

The protein belongs to the MIF family.

The protein resides in the secreted. It catalyses the reaction L-dopachrome = 5,6-dihydroxyindole-2-carboxylate. The catalysed reaction is 3-phenylpyruvate = enol-phenylpyruvate. Functionally, tautomerization of the methyl ester of L-dopachrome. Inhibits migration of human peripheral blood mononuclear cells. The protein is Macrophage migration inhibitory factor homolog of Trichinella spiralis (Trichina worm).